A 361-amino-acid polypeptide reads, in one-letter code: Histidinol-phosphate aminotransferase (361 aa).

The interval 26 to 45 (GMDPEDLTKLSSNENPHGPS) is disordered. Lysine 222 carries the post-translational modification N6-(pyridoxal phosphate)lysine.

This sequence belongs to the class-II pyridoxal-phosphate-dependent aminotransferase family. Histidinol-phosphate aminotransferase subfamily. The cofactor is pyridoxal 5'-phosphate.

It catalyses the reaction L-histidinol phosphate + 2-oxoglutarate = 3-(imidazol-4-yl)-2-oxopropyl phosphate + L-glutamate. Its pathway is amino-acid biosynthesis; L-histidine biosynthesis; L-histidine from 5-phospho-alpha-D-ribose 1-diphosphate: step 7/9. This Haloferax volcanii (strain ATCC 29605 / DSM 3757 / JCM 8879 / NBRC 14742 / NCIMB 2012 / VKM B-1768 / DS2) (Halobacterium volcanii) protein is Histidinol-phosphate aminotransferase (hisC).